Consider the following 86-residue polypeptide: RNA-binding protein Hfq (86 aa).

The Sm domain occupies aspartate 9–valine 68. Residues proline 67–alanine 86 form a disordered region. Residues aspartate 75–alanine 86 show a composition bias toward basic and acidic residues.

Belongs to the Hfq family. As to quaternary structure, homohexamer.

Functionally, RNA chaperone that binds small regulatory RNA (sRNAs) and mRNAs to facilitate mRNA translational regulation in response to envelope stress, environmental stress and changes in metabolite concentrations. Also binds with high specificity to tRNAs. The sequence is that of RNA-binding protein Hfq from Pseudomonas putida (strain GB-1).